A 326-amino-acid polypeptide reads, in one-letter code: Cyclin-dependent kinase 6 (326 aa).

Met1 is subject to N-acetylmethionine. A phosphotyrosine mark is found at Tyr13 and Tyr24. The 288-residue stretch at 13 to 300 (YECVAEIGEG…AYSALSHPYF (288 aa)) folds into the Protein kinase domain. Residues 19-27 (IGEGAYGKV) and Lys43 contribute to the ATP site. Residues Thr49 and Thr70 each carry the phosphothreonine modification. Asp145 (proton acceptor) is an active-site residue. Residue Thr177 is modified to Phosphothreonine. Lys264 carries the N6-acetyllysine modification. Residue Thr325 is modified to Phosphothreonine.

Belongs to the protein kinase superfamily. CMGC Ser/Thr protein kinase family. CDC2/CDKX subfamily. In terms of assembly, interaction with D-type G1 cyclins. Cyclin binding promotes enzyme activation by phosphorylation at Thr-177. Binds to RUNX1, CDKN2D, FBXO7 and CDKN2C/p18-INK4c. Forms a cytoplasmic complex with Hsp90/HSP90AB1 and CDC37. FBXO7-binding promotes D-type cyclin binding. Interacts with Kaposi's sarcoma herpesvirus (KSHV) V-cyclin and herpesvirus saimiri (V-cyclin/ECLF2); the CDK6/V-cyclin complex phosphorylates NPM1 and thus lead to viral reactivation by reducing viral LANA levels. Post-translationally, thr-177 phosphorylation and Tyr-24 dephosphorylation promotes kinase activity. As to expression, expressed ubiquitously. Accumulates in squamous cell carcinomas, proliferating hematopoietic progenitor cells, beta-cells of pancreatic islets of Langerhans, and neuroblastomas. Reduced levels in differentiating cells.

The protein localises to the cytoplasm. The protein resides in the nucleus. It localises to the cell projection. Its subcellular location is the ruffle. It is found in the cytoskeleton. The protein localises to the microtubule organizing center. The protein resides in the centrosome. The catalysed reaction is L-seryl-[protein] + ATP = O-phospho-L-seryl-[protein] + ADP + H(+). It catalyses the reaction L-threonyl-[protein] + ATP = O-phospho-L-threonyl-[protein] + ADP + H(+). Its activity is regulated as follows. Inhibited by INK4 proteins (CDKN2C/p18-INK4c), aminopurvalanol, PD0332991, 4-(Pyrazol-4-yl)-pyrimidines and fisetin, a flavonol inhibitor. Activated by Thr-177 phosphorylation and Tyr-24 dephosphorylation. Stimulated by cyclin from herpesvirus saimiri (V-cyclin/ECLF2). Rapidly down-regulated prior to cell differentiation (e.g. erythroid and osteoblast). In terms of biological role, serine/threonine-protein kinase involved in the control of the cell cycle and differentiation; promotes G1/S transition. Phosphorylates pRB/RB1 and NPM1. Interacts with D-type G1 cyclins during interphase at G1 to form a pRB/RB1 kinase and controls the entrance into the cell cycle. Involved in initiation and maintenance of cell cycle exit during cell differentiation; prevents cell proliferation and negatively regulates cell differentiation, but is required for the proliferation of specific cell types (e.g. erythroid and hematopoietic cells). Essential for cell proliferation within the dentate gyrus of the hippocampus and the subventricular zone of the lateral ventricles. Required during thymocyte development. Promotes the production of newborn neurons, probably by modulating G1 length. Promotes, at least in astrocytes, changes in patterns of gene expression, changes in the actin cytoskeleton including loss of stress fibers, and enhanced motility during cell differentiation. Prevents myeloid differentiation by interfering with RUNX1 and reducing its transcription transactivation activity, but promotes proliferation of normal myeloid progenitors. Delays senescence. Promotes the proliferation of beta-cells in pancreatic islets of Langerhans. May play a role in the centrosome organization during the cell cycle phases. The polypeptide is Cyclin-dependent kinase 6 (CDK6) (Homo sapiens (Human)).